A 532-amino-acid polypeptide reads, in one-letter code: Exodeoxyribonuclease 7 large subunit (532 aa).

Residues 497–532 (AITTGEGTPAPETAAAPKKKPAKPASSDPGNQGNLF) are disordered. The span at 499-512 (TTGEGTPAPETAAA) shows a compositional bias: low complexity.

It belongs to the XseA family. Heterooligomer composed of large and small subunits.

The protein resides in the cytoplasm. It catalyses the reaction Exonucleolytic cleavage in either 5'- to 3'- or 3'- to 5'-direction to yield nucleoside 5'-phosphates.. In terms of biological role, bidirectionally degrades single-stranded DNA into large acid-insoluble oligonucleotides, which are then degraded further into small acid-soluble oligonucleotides. This chain is Exodeoxyribonuclease 7 large subunit, found in Agrobacterium fabrum (strain C58 / ATCC 33970) (Agrobacterium tumefaciens (strain C58)).